A 157-amino-acid chain; its full sequence is MAMSPYIFIVLILIILSMYRERTVKPGKLLIIPLLLLWGVSASFQPAYFHSVLHVAISGILLLIGLACGFGIGKMVNVRIHPETGKVTSRGSLGSVILILVILSLRMAARTWLPESNEMFIAIIHSMFFVPLGTITARNIMLYKAYRRLTAGKVSIQ.

4 helical membrane passes run Leu29 to Phe49, Val52 to Ile72, Leu93 to Leu113, and Asn117 to Ala137.

It localises to the cell membrane. This is an uncharacterized protein from Bacillus subtilis (strain 168).